The following is a 483-amino-acid chain: MFS-type transporter hepF (483 aa).

A disordered region spans residues 1–31 (METPAGKADRPRDHDSEQSQDNVVSWEGEDD). Positions 7–17 (KADRPRDHDSE) are enriched in basic and acidic residues. The next 11 helical transmembrane spans lie at 89–109 (TIVV…AAPI), 124–144 (ILYT…MLIV), 147–167 (FFAG…VADL), 179–199 (FVTL…GFLT), 206–226 (WVFW…ILFT), 276–296 (PISL…YVLV), 311–331 (IGIS…GLWI), 357–377 (PMMI…GWSV), 385–405 (MPIV…MPMV), 416–436 (AASA…VLPL), and 448–468 (GWGN…LIAI).

Belongs to the major facilitator superfamily.

It localises to the cell membrane. In terms of biological role, MFS-type transporter; part of the gene cluster that mediates the biosynthesis of heptelidic acid (HA), a sesquiterpene lactone that acts as an inhibitor of glyceraldehyde-3-phosphatedehydrogenase (GAPDH) and a growth inhibitor of the salt-tolerant lactic acid bacteria in soy sauce brewing. Might be required for efficient secretion of heptelidic acid. In Aspergillus oryzae (strain ATCC 42149 / RIB 40) (Yellow koji mold), this protein is MFS-type transporter hepF (hepF).